The following is a 125-amino-acid chain: Protein AC4 (125 aa).

The protein belongs to the geminiviridae protein AC4/C4 family.

Functionally, pathogenicity determinant. May act as a suppressor of RNA-mediated gene silencing, also known as post-transcriptional gene silencing (PTGS), a mechanism of plant viral defense that limits the accumulation of viral RNAs. This Cucurbita moschata (Winter crookneck squash) protein is Protein AC4.